A 334-amino-acid polypeptide reads, in one-letter code: Anthranilate phosphoribosyltransferase (334 aa).

5-phospho-alpha-D-ribose 1-diphosphate-binding positions include Gly79, 82 to 83 (GD), Ser87, 89 to 92 (NIST), 107 to 115 (KAGNRSISS), and Ser119. Anthranilate is bound at residue Gly79. Residue Ser91 participates in Mg(2+) binding. Asn110 contacts anthranilate. Residue Arg165 coordinates anthranilate. 2 residues coordinate Mg(2+): Asp224 and Glu225.

It belongs to the anthranilate phosphoribosyltransferase family. As to quaternary structure, homodimer. Mg(2+) serves as cofactor.

The enzyme catalyses N-(5-phospho-beta-D-ribosyl)anthranilate + diphosphate = 5-phospho-alpha-D-ribose 1-diphosphate + anthranilate. Its pathway is amino-acid biosynthesis; L-tryptophan biosynthesis; L-tryptophan from chorismate: step 2/5. Its function is as follows. Catalyzes the transfer of the phosphoribosyl group of 5-phosphorylribose-1-pyrophosphate (PRPP) to anthranilate to yield N-(5'-phosphoribosyl)-anthranilate (PRA). This is Anthranilate phosphoribosyltransferase from Streptococcus thermophilus (strain ATCC BAA-250 / LMG 18311).